The sequence spans 230 residues: Transmembrane protein 225 (230 aa).

The Cytoplasmic portion of the chain corresponds to 1-8 (MMHIPNRS). The helical transmembrane segment at 9–29 (IQAANIFFSSGAILLLIVGLI) threads the bilayer. Residues 30-71 (MEDWVELIPKVRKDKTTHSPWLGCCPPFWPEESLEVVRRIMR) are Extracellular-facing. The helical transmembrane segment at 72-92 (MTLNISIYLNLIIGLQFSYMI) threads the bilayer. Over 93 to 99 (SQNKCVH) the chain is Cytoplasmic. The helical transmembrane segment at 100–120 (LLVGFLSFFAGCLLFYAIIVY) threads the bilayer. Topologically, residues 121-139 (HHKLNKGQYVYFVNYKTKW) are extracellular. Residues 140 to 160 (IAFTVYLTIALFLTCGIFCFI) form a helical membrane-spanning segment. Residues 161–230 (QSTNRCECMK…TQARRVTWAL (70 aa)) lie on the Cytoplasmic side of the membrane. The short motif at 224–228 (RRVTW) is the RVxF element.

Interacts (via RVxF motif) with PPP1CC. In terms of tissue distribution, expressed in testis, epididymis and spermatozoa (at protein level). Not expressed in brain, heart, lung, liver, spleen, kidney and skeletal muscle.

It is found in the cytoplasmic vesicle. The protein localises to the secretory vesicle. It localises to the acrosome membrane. In terms of biological role, probably inhibits protein phosphatase 1 (PP1) in sperm via binding to catalytic subunit PPP1CC. The polypeptide is Transmembrane protein 225 (Tmem225) (Mus musculus (Mouse)).